The sequence spans 649 residues: Alpha-amylase (649 aa).

The active-site Nucleophile is the glutamate 124. Residue aspartate 215 is the Proton donor of the active site.

Belongs to the glycosyl hydrolase 57 family. As to quaternary structure, homodimer.

The enzyme catalyses Endohydrolysis of (1-&gt;4)-alpha-D-glucosidic linkages in polysaccharides containing three or more (1-&gt;4)-alpha-linked D-glucose units.. Displays a broad range of substrate specificity, with the capacity to hydrolyze carbohydrates as simple as maltotriose. The chain is Alpha-amylase (amyA) from Pyrococcus furiosus (strain ATCC 43587 / DSM 3638 / JCM 8422 / Vc1).